The sequence spans 334 residues: Sucrose operon repressor (334 aa).

The HTH lacI-type domain occupies 6-63 (VTIKDIAELAGVSKATASLVLNGRGKELRVAQETRERVLAIAREQHYQPSIHARSLRD). Residues 8–27 (IKDIAELAGVSKATASLVLN) constitute a DNA-binding region (H-T-H motif).

Its function is as follows. Repressor for the scr operon. Binds D-fructose as an inducer. This chain is Sucrose operon repressor (scrR), found in Klebsiella pneumoniae.